A 294-amino-acid chain; its full sequence is Ventral anterior homeobox 2b (294 aa).

Basic and acidic residues predominate over residues 1–10 (MGDGVSEERS). Disordered regions lie at residues 1 to 27 (MGDG…VRDR), 43 to 65 (KDIP…DSQS), 149 to 168 (RRTK…SSST), 190 to 223 (PAPP…PVIS), and 272 to 294 (SSAF…KSTS). A DNA-binding region (homeobox) is located at residues 98-157 (PKRTRTSFTAEQLYRLELEFQRCQYVVGRERTELARQLNLSETQVKVWFQNRRTKQKKDQ). Residues 154 to 165 (KKDQSRDSEKRS) show a composition bias toward basic and acidic residues. Positions 197-219 (SSQNNMGTSSGNGTSLGTSGSTS) are enriched in low complexity. Residues 279 to 288 (TRLDRKDTAS) are compositionally biased toward basic and acidic residues.

The protein belongs to the EMX homeobox family.

Its subcellular location is the nucleus. Transcription factor that may function in dorsoventral specification of the forebrain. Regulates the expression of Wnt signaling antagonists. The protein is Ventral anterior homeobox 2b (vax2-b) of Xenopus laevis (African clawed frog).